A 27-amino-acid chain; its full sequence is Natriuretic peptides A (27 aa).

A disulfide bond links Cys7 and Cys23.

Belongs to the natriuretic peptide family.

It localises to the secreted. In terms of biological role, hormone playing a key role in cardiovascular homeostasis through regulation of natriuresis, diuresis, and vasodilation. Has a cGMP-stimulating activity. This Anguilla japonica (Japanese eel) protein is Natriuretic peptides A (nppa).